A 376-amino-acid chain; its full sequence is Fibromodulin (376 aa).

A signal peptide spans 1-18; it reads MQWASILLLRGLCSLSQG. Glutamine 19 is subject to Pyrrolidone carboxylic acid. Residues tyrosine 20, tyrosine 38, tyrosine 53, tyrosine 55, tyrosine 63, and tyrosine 65 each carry the sulfotyrosine modification. One can recognise an LRRNT domain in the interval 67–105; sequence APPPPEPRDCPQECDCPPNFPTAMYCDNRNLKYLPFVPS. LRR repeat units lie at residues 106–127, 130–143, 156–176, 177–198, 201–222, 224–245, 246–266, and 269–289; these read RMKY…VFDN, GLLW…QITS, HLER…PLPR, SLRE…ALEG, NLTA…MRGL, SLIL…LPSA, LEQL…YFRG, and KLLY…ATNT. N-linked (GlcNAc...) (keratan sulfate) asparagine glycosylation occurs at asparagine 127. Asparagine 166 carries an N-linked (GlcNAc...) (keratan sulfate) asparagine glycan. Residue asparagine 201 is glycosylated (N-linked (GlcNAc...) (keratan sulfate) asparagine). An N-linked (GlcNAc...) (keratan sulfate) asparagine glycan is attached at asparagine 291. LRR repeat units lie at residues 294-315 and 316-335; these read SLLE…NTNL and ENLY…SFCT. Cysteine 334 and cysteine 367 are joined by a disulfide. An N-linked (GlcNAc...) asparagine glycan is attached at asparagine 341. The LRR 11 repeat unit spans residues 344–367; the sequence is KLQVLRLDGNEIKRSAMPVDAPLC.

The protein belongs to the small leucine-rich proteoglycan (SLRP) family. SLRP class II subfamily. Binds to type I and type II collagen. Post-translationally, binds keratan sulfate chains.

It localises to the secreted. The protein localises to the extracellular space. It is found in the extracellular matrix. Affects the rate of fibrils formation. May have a primary role in collagen fibrillogenesis. The chain is Fibromodulin (Fmod) from Rattus norvegicus (Rat).